The primary structure comprises 273 residues: uncharacterized protein (273 aa).

10-34 (VITGAATGIGQATAEVFANEGARVI) is an NAD(+) binding site. S142 contacts substrate. The Proton acceptor role is filled by Y155.

Belongs to the short-chain dehydrogenases/reductases (SDR) family.

This is an uncharacterized protein from Bacillus subtilis (strain 168).